A 133-amino-acid chain; its full sequence is Oocytes ribonuclease (133 aa).

The N-terminal stretch at 1–22 (MCAKSLLLVFGILLGLSHLSLS) is a signal peptide. Glutamine 23 bears the Pyrrolidone carboxylic acid mark. The Proton acceptor role is filled by histidine 32. 4 disulfide bridges follow: cysteine 41–cysteine 93, cysteine 56–cysteine 103, cysteine 74–cysteine 118, and cysteine 115–cysteine 132. 57 to 61 (KRVNT) provides a ligand contact to substrate. Catalysis depends on histidine 125, which acts as the Proton donor.

This sequence belongs to the pancreatic ribonuclease family. In terms of assembly, monomer.

It is found in the secreted. Functionally, preferentially cleaves single-stranded RNA at pyrimidine residues with a 3'flanking guanine. Hydrolyzes poly(U) and poly(C) as substrates, and prefers the former. The S-lectins in frog eggs may be involved in the fertilization and development of the frog embryo. This lectin agglutinates various animal cells, including normal lymphocytes, erythrocytes, and fibroblasts of animal and human origin. It is cytotoxic against several tumor cells. The sequence is that of Oocytes ribonuclease (RCR) from Aquarana catesbeiana (American bullfrog).